The following is a 1857-amino-acid chain: Chitin synthase Y (1857 aa).

Residues 1–22 (MVGPSPAGTVPSHAQSSLPSLP) form a disordered region. Residues 1–788 (MVGPSPAGTV…CWADLAKVGE (788 aa)) enclose the Myosin motor domain. Residue 102-109 (GESGAGKT) participates in ATP binding. The disordered stretch occupies residues 601–653 (SSKPLRMPSMARRKASPASRLTFDAPTAEEPEDNESYGGSTAKSSGRRKSAMS). Residue Asn634 is glycosylated (N-linked (GlcNAc...) asparagine). The tract at residues 668 to 692 (LEIVNKCLSSPSLNPYFIFCLKPND) is actin-binding. The next 2 helical transmembrane spans lie at 898–918 (WMAIVWLLTFYIPDFAIRLFG) and 937–957 (LIIWFSCAVAIFFIVAFPGLV). The region spanning 961–1020 (QHVYSAAELESHNGKNGHDSYIAIRGVVFDLDKFMPRHYPDIVPQSSLKKYAGMDATGLF) is the Cytochrome b5 heme-binding domain. Asn1047 and Asn1072 each carry an N-linked (GlcNAc...) asparagine glycan. A helical transmembrane segment spans residues 1209 to 1229 (FILAISILICAVVIFKFAAAL). A glycan (N-linked (GlcNAc...) asparagine) is linked at Asn1572. Transmembrane regions (helical) follow at residues 1603–1623 (LLSTCIQPVSLAYIIYLIVWL), 1630–1650 (IPWTSFVLIAAIYGLQALIFI), and 1657–1677 (MIGWMIVYLLAMPIFSVALPF). A DEK-C domain is found at 1799 to 1854 (LPSDDAILAEIREILRTADLMTVTKKSIKQELERRFGVNLDAKRPYINSATEAVLS).

The protein in the N-terminal section; belongs to the TRAFAC class myosin-kinesin ATPase superfamily. Myosin family. It in the C-terminal section; belongs to the chitin synthase family. Class V subfamily.

The protein resides in the cell membrane. It is found in the cell septum. It localises to the cell tip. It catalyses the reaction [(1-&gt;4)-N-acetyl-beta-D-glucosaminyl](n) + UDP-N-acetyl-alpha-D-glucosamine = [(1-&gt;4)-N-acetyl-beta-D-glucosaminyl](n+1) + UDP + H(+). Functionally, polymerizes chitin, a structural polymer of the cell wall and septum, by transferring the sugar moiety of UDP-GlcNAc to the non-reducing end of the growing chitin polymer. Specifically involved in hyphal elongation and new cell wall formation. In Aspergillus oryzae (strain ATCC 42149 / RIB 40) (Yellow koji mold), this protein is Chitin synthase Y.